Consider the following 412-residue polypeptide: Mitochondrial distribution and morphology protein 12 (412 aa).

Positions 1-410 (MSIDLEWAKL…FPNFHTLVMG (410 aa)) constitute an SMP-LTD domain. Disordered regions lie at residues 66–96 (EDDE…DGYE), 108–136 (YTEG…SPTD), 166–238 (QGSG…QQEN), and 314–354 (PAGD…KPLP). A compositionally biased stretch (low complexity) spans 220 to 238 (NQPVFPSQQPQQQQPQQEN).

It belongs to the MDM12 family. Component of the ER-mitochondria encounter structure (ERMES) or MDM complex, composed of MMM1, MDM10, MDM12 and MDM34. An MMM1 homodimer associates with one molecule of MDM12 on each side in a pairwise head-to-tail manner, and the SMP-LTD domains of MMM1 and MDM12 generate a continuous hydrophobic tunnel for phospholipid trafficking.

It localises to the mitochondrion outer membrane. The protein localises to the endoplasmic reticulum membrane. Functionally, component of the ERMES/MDM complex, which serves as a molecular tether to connect the endoplasmic reticulum (ER) and mitochondria. Components of this complex are involved in the control of mitochondrial shape and protein biogenesis, and function in nonvesicular lipid trafficking between the ER and mitochondria. MDM12 is required for the interaction of the ER-resident membrane protein MMM1 and the outer mitochondrial membrane-resident beta-barrel protein MDM10. The MDM12-MMM1 subcomplex functions in the major beta-barrel assembly pathway that is responsible for biogenesis of all mitochondrial outer membrane beta-barrel proteins, and acts in a late step after the SAM complex. The MDM10-MDM12-MMM1 subcomplex further acts in the TOM40-specific pathway after the action of the MDM12-MMM1 complex. Essential for establishing and maintaining the structure of mitochondria and maintenance of mtDNA nucleoids. The polypeptide is Mitochondrial distribution and morphology protein 12 (Coprinopsis cinerea (strain Okayama-7 / 130 / ATCC MYA-4618 / FGSC 9003) (Inky cap fungus)).